Consider the following 304-residue polypeptide: E3 ubiquitin-protein ligase RNF144B (304 aa).

Residues Pro-27 to Leu-245 are TRIAD supradomain. Positions 31, 34, 54, 57, 122, 127, 146, 149, 154, 157, 162, 167, 194, and 197 each coordinate Zn(2+). Residues Cys-31 to Cys-81 form an RING-type 1 zinc finger. The segment at Gln-102–Cys-167 adopts an IBR-type zinc-finger fold. The RING-type 2; atypical zinc finger occupies Cys-194 to Cys-223. Cys-207 is a catalytic residue. Zn(2+)-binding residues include Cys-212, Cys-215, Cys-220, Cys-223, His-235, and Cys-241. A helical transmembrane segment spans residues Val-259 to Leu-279.

It belongs to the RBR family. RNF144 subfamily. In terms of assembly, interacts with UBE2L3, UBE2L6 and LCMT2, as well as with BAX. Interacts with TBK1; this interaction inhibits TBK1 phosphorylation and 'Lys-63'-linked polyubiquitination. In terms of processing, auto-ubiquitinated.

Its subcellular location is the mitochondrion membrane. It is found in the cytoplasm. The enzyme catalyses [E2 ubiquitin-conjugating enzyme]-S-ubiquitinyl-L-cysteine + [acceptor protein]-L-lysine = [E2 ubiquitin-conjugating enzyme]-L-cysteine + [acceptor protein]-N(6)-ubiquitinyl-L-lysine.. It functions in the pathway protein modification; protein ubiquitination. In terms of biological role, E3 ubiquitin-protein ligase which accepts ubiquitin from E2 ubiquitin-conjugating enzymes UBE2L3 and UBE2L6 in the form of a thioester and then directly transfers the ubiquitin to targeted substrates such as LCMT2, thereby promoting their degradation. Induces apoptosis via a p53/TP53-dependent but caspase-independent mechanism. Plays a crucial role in maintaining the genomic stability by controlling the degradation of multiple proteins involved in mitotic progression and DNA damage. Regulates epithelial homeostasis by mediating degradation of CDKN1A and isoform 2 of TP63. Plays a regulatory role in innate immunity by negatively regulating IRF3 activation and IFN-beta production. Mechanistically, inhibits TBK1 phosphorylation and 'Lys-63'-linked polyubiquitination independently of its E3 ligase activity. Alternatively, promotes 'Lys-27' and 'Lys-33'-linked ubiquitination of IFIH1/MDA5, promoting selective autophagic degradation of IFIH1/MDA5 to inhibit antiviral response. This is E3 ubiquitin-protein ligase RNF144B (RNF144B) from Bos taurus (Bovine).